The following is a 511-amino-acid chain: Frizzled/smoothened-like sans CRD protein C (511 aa).

Positions Met-1–Ser-25 are cleaved as a signal peptide. The Extracellular portion of the chain corresponds to Asn-26 to Leu-93. Asn-51 carries an N-linked (GlcNAc...) asparagine glycan. A helical transmembrane segment spans residues Ile-94–Ile-114. Over Asn-115–Thr-122 the chain is Cytoplasmic. A helical transmembrane segment spans residues Val-123–Leu-143. Residues Trp-144–Thr-172 are Extracellular-facing. A helical membrane pass occupies residues Thr-173–Val-193. Residues Asp-194–Gln-209 lie on the Cytoplasmic side of the membrane. The helical transmembrane segment at Leu-210–Val-230 threads the bilayer. The Extracellular segment spans residues Lys-231–Gly-253. Residues Phe-254–Phe-274 form a helical membrane-spanning segment. The Cytoplasmic segment spans residues Trp-275 to Pro-295. Residues Leu-296–Ile-316 traverse the membrane as a helical segment. The Extracellular portion of the chain corresponds to Thr-317–Gln-357. Residues Phe-358–Thr-378 traverse the membrane as a helical segment. Residues Ala-379–Pro-511 lie on the Cytoplasmic side of the membrane. Residues Asn-430–Pro-511 are disordered. Gly residues predominate over residues Thr-433–Ser-443. The segment covering Lys-451 to Asp-460 has biased composition (polar residues). Residues Asn-461 to Asn-485 are compositionally biased toward low complexity. Positions Ser-486–Pro-511 are enriched in polar residues.

The protein belongs to the G-protein coupled receptor Fz/Smo family.

The protein localises to the membrane. The polypeptide is Frizzled/smoothened-like sans CRD protein C (fscC) (Dictyostelium discoideum (Social amoeba)).